A 147-amino-acid chain; its full sequence is Histone H3.X (147 aa).

Low complexity predominate over residues 1 to 16; it reads MARTKQTARKATAWQA. The interval 1-43 is disordered; the sequence is MARTKQTARKATAWQAPRKPLATKAARKRASPTGGIKKPHRYK. The residue at position 3 (Arg3) is an Asymmetric dimethylarginine. At Arg3 the chain carries Citrulline; alternate. Thr4 is subject to Phosphothreonine. Lys5 carries the allysine; alternate modification. N6,N6,N6-trimethyllysine; alternate is present on Lys5. At Lys5 the chain carries N6,N6-dimethyllysine; alternate. Lys5 carries the post-translational modification N6-(2-hydroxyisobutyryl)lysine; alternate. At Lys5 the chain carries N6-(beta-hydroxybutyryl)lysine; alternate. Position 5 is an N6-acetyllysine; alternate (Lys5). An N6-crotonyllysine; alternate modification is found at Lys5. Lys5 bears the N6-methyllysine; alternate mark. Gln6 carries the post-translational modification 5-glutamyl dopamine; alternate. At Gln6 the chain carries 5-glutamyl serotonin; alternate. Phosphothreonine is present on Thr7. Arg9 carries the citrulline; alternate modification. Arg9 is subject to Symmetric dimethylarginine. Lys10 is modified (N6,N6,N6-trimethyllysine; alternate). Lys10 carries the N6,N6-dimethyllysine; alternate modification. Lys10 carries the N6-(2-hydroxyisobutyryl)lysine; alternate modification. At Lys10 the chain carries N6-(beta-hydroxybutyryl)lysine; alternate. N6-acetyllysine; alternate is present on Lys10. Lys10 is subject to N6-crotonyllysine; alternate. Lys10 carries the N6-methyllysine; alternate modification. Lys10 bears the N6-butyryllysine; alternate mark. The residue at position 10 (Lys10) is an N6-lactoyllysine; alternate. Thr12 bears the Phosphothreonine mark. Arg18 is modified (asymmetric dimethylarginine). Arg18 bears the Citrulline; alternate mark. 2 positions are modified to N6-(2-hydroxyisobutyryl)lysine; alternate: Lys19 and Lys24. N6-(beta-hydroxybutyryl)lysine; alternate occurs at positions 19 and 24. 2 positions are modified to N6-acetyllysine; alternate: Lys19 and Lys24. N6-crotonyllysine; alternate occurs at positions 19 and 24. 2 positions are modified to N6-methyllysine; alternate: Lys19 and Lys24. Lys19 and Lys24 each carry N6-butyryllysine; alternate. 2 positions are modified to N6-lactoyllysine; alternate: Lys19 and Lys24. An N6-glutaryllysine; alternate mark is found at Lys19 and Lys24. Arg27 bears the Citrulline mark. 2 positions are modified to N6,N6,N6-trimethyllysine; alternate: Lys28 and Lys37. Lys28 and Lys37 each carry N6,N6-dimethyllysine; alternate. N6-(2-hydroxyisobutyryl)lysine; alternate is present on residues Lys28 and Lys37. Lys28 is subject to N6-(beta-hydroxybutyryl)lysine; alternate. Lys28 and Lys37 each carry N6-acetyllysine; alternate. An N6-crotonyllysine; alternate modification is found at Lys28. N6-methyllysine; alternate is present on residues Lys28 and Lys37. An N6-lactoyllysine; alternate modification is found at Lys28. An N6-glutaryllysine; alternate modification is found at Lys28. Residue Lys38 is modified to N6-methyllysine. Residue Tyr42 is modified to Phosphotyrosine. Position 57 is an N6,N6,N6-trimethyllysine; alternate (Lys57). Lys57 carries the N6-(2-hydroxyisobutyryl)lysine; alternate modification. Position 57 is an N6-(beta-hydroxybutyryl)lysine; alternate (Lys57). An N6-acetyllysine; alternate modification is found at Lys57. The residue at position 57 (Lys57) is an N6-crotonyllysine; alternate. Lys57 bears the N6-lactoyllysine; alternate mark. The residue at position 57 (Lys57) is an N6-glutaryllysine; alternate. Residue Lys57 is modified to N6-methyllysine. Lys57 is modified (N6-succinyllysine; alternate). Ser58 bears the Phosphoserine mark. N6-(2-hydroxyisobutyryl)lysine; alternate is present on Lys65. An N6-methyllysine; alternate modification is found at Lys65. Phosphoserine is present on Ser87. Thr108 carries the post-translational modification Phosphothreonine.

The protein belongs to the histone H3 family. The nucleosome is a histone octamer containing two molecules each of H2A, H2B, H3 and H4 assembled in one H3-H4 heterotetramer and two H2A-H2B heterodimers. The octamer wraps approximately 147 bp of DNA. Post-translationally, acetylation is generally linked to gene activation. Acetylation on Lys-10 (H3K9ac) impairs methylation at Arg-9 (H3R8me2s). Acetylation on Lys-19 (H3K18ac) and Lys-24 (H3K24ac) favors methylation at Arg-18 (H3R17me). Citrullination at Arg-9 (H3R8ci) and/or Arg-18 (H3R17ci) impairs methylation and represses transcription. In terms of processing, asymmetric dimethylation at Arg-18 (H3R17me2a) is linked to gene activation. Symmetric dimethylation at Arg-9 (H3R8me2s) is linked to gene repression. Asymmetric dimethylation at Arg-3 (H3R2me2a) is linked to gene repression and is mutually exclusive with H3 Lys-5 methylation (H3K4me2 and H3K4me3). H3R2me2a is present at the 3' of genes regardless of their transcription state and is enriched on inactive promoters, while it is absent on active promoters. Post-translationally, methylation at Lys-5 (H3K4me) facilitates subsequent acetylation of H3 and H4. Methylation at Lys-10 (H3K9me) and Lys-28 (H3K27me), which are linked to gene repression, are underrepresented. Methylation at Lys-10 (H3K9me) is a specific target for HP1 proteins (CBX1, CBX3 and CBX5) and prevents subsequent acetylation of H3 and H4. Phosphorylation at Thr-7 (H3T6ph) is a specific tag for epigenetic transcriptional activation that prevents demethylation of Lys-5 (H3K4me) by LSD1/KDM1A. At centromeres, specifically phosphorylated at Thr-12 (H3T11ph) from prophase to early anaphase. Phosphorylation at Thr-12 (H3T11ph) is a specific tag for epigenetic transcriptional activation that promotes demethylation of Lys-10 (H3K9me). Phosphorylation at Tyr-42 (H3Y41ph) promotes exclusion of CBX5 (HP1 alpha) from chromatin. In terms of processing, lysine deamination at Lys-5 (H3K4all) to form allysine. Allysine formation only takes place on H3K4me3 and results in gene repression. Post-translationally, crotonylation (Kcr) is specifically present in male germ cells and marks testis-specific genes in post-meiotic cells, including X-linked genes that escape sex chromosome inactivation in haploid cells. Crotonylation marks active promoters and enhancers and confers resistance to transcriptional repressors. It is also associated with post-meiotically activated genes on autosomes. Butyrylation of histones marks active promoters and competes with histone acetylation. It is present during late spermatogenesis. As to expression, expressed at low level in some tissues, such as testis and brain.

It is found in the nucleus. It localises to the chromosome. Its function is as follows. Primate-specific variant histone H3, which constitutes a core component of nucleosomes. Nucleosomes wrap and compact DNA into chromatin, limiting DNA accessibility to the cellular machineries which require DNA as a template. Histones thereby play a central role in transcription regulation, DNA repair, DNA replication and chromosomal stability. DNA accessibility is regulated via a complex set of post-translational modifications of histones, also called histone code, and nucleosome remodeling. The sequence is that of Histone H3.X from Homo sapiens (Human).